The primary structure comprises 314 residues: Serine/threonine-protein phosphatase CPPED1 (314 aa).

Position 2 is a phosphoserine (Ser2). The tract at residues 47-250 (KAWSTGDCDN…KVVFSGHYHR (204 aa)) is catalytic. A divalent metal cation contacts are provided by Asp53, Asp90, Asn127, and His247. At Ser294 the chain carries Phosphoserine.

The protein belongs to the metallophosphoesterase superfamily. CPPED1 family. Requires a divalent metal cation as cofactor.

It localises to the cytoplasm. It carries out the reaction O-phospho-L-seryl-[protein] + H2O = L-seryl-[protein] + phosphate. The catalysed reaction is O-phospho-L-threonyl-[protein] + H2O = L-threonyl-[protein] + phosphate. Functionally, protein phosphatase that dephosphorylates AKT family kinase specifically at 'Ser-473', blocking cell cycle progression and promoting cell apoptosis. May play an inhibitory role in glucose uptake by adipocytes. In Pongo abelii (Sumatran orangutan), this protein is Serine/threonine-protein phosphatase CPPED1 (CPPED1).